The chain runs to 64 residues: MARICQITGKGPMVGNNVSHANNKTKRRFLPNLRTVRVTLEDGTTKKMRIAASTLRTLKKQNSK.

This sequence belongs to the bacterial ribosomal protein bL28 family.

This chain is Large ribosomal subunit protein bL28, found in Campylobacter jejuni subsp. doylei (strain ATCC BAA-1458 / RM4099 / 269.97).